We begin with the raw amino-acid sequence, 231 residues long: uncharacterized protein (231 aa).

The protein belongs to the DnaA family. HdA subfamily.

This is an uncharacterized protein from Haemophilus influenzae (strain ATCC 51907 / DSM 11121 / KW20 / Rd).